The primary structure comprises 132 residues: Small ribosomal subunit protein uS8c (132 aa).

It belongs to the universal ribosomal protein uS8 family. As to quaternary structure, part of the 30S ribosomal subunit.

It localises to the plastid. The protein localises to the chloroplast. In terms of biological role, one of the primary rRNA binding proteins, it binds directly to 16S rRNA central domain where it helps coordinate assembly of the platform of the 30S subunit. The protein is Small ribosomal subunit protein uS8c (rps8) of Pinus thunbergii (Japanese black pine).